A 112-amino-acid polypeptide reads, in one-letter code: uncharacterized protein (112 aa).

The chain crosses the membrane as a helical span at residues 62–82 (THSFIFFILFLFIFIFLTFSH).

It localises to the membrane. This is an uncharacterized protein from Saccharomyces cerevisiae (strain ATCC 204508 / S288c) (Baker's yeast).